The following is a 385-amino-acid chain: Zinc finger protein B385R (385 aa).

The segment at 166 to 190 (LQCPNCGCIQELMGTIFDETHFYNH) adopts a C2H2-type zinc-finger fold.

The protein belongs to the asfivirus B385R family.

In Ornithodoros (relapsing fever ticks), this protein is Zinc finger protein B385R.